We begin with the raw amino-acid sequence, 984 residues long: Putative formate dehydrogenase SAB2186c (984 aa).

One can recognise a 2Fe-2S ferredoxin-type domain in the interval 3–79 (EHLVVTLDGK…PMTVNTVNND (77 aa)). Cys-37, Cys-48, Cys-51, and Cys-63 together coordinate [2Fe-2S] cluster. The 4Fe-4S His(Cys)3-ligated-type domain maps to 79-119 (DVKDAQKEALDRILEKHMLYCTVCDYNNGDCEIHNTMDAWG). [4Fe-4S] cluster contacts are provided by His-95, Cys-99, Cys-102, Cys-109, Cys-147, Cys-150, Cys-153, Cys-157, Cys-190, Cys-193, Cys-196, Cys-200, Cys-264, Cys-267, Cys-271, and Cys-299. 2 consecutive 4Fe-4S ferredoxin-type domains span residues 138 to 165 (PFYR…VNET) and 181 to 211 (NDVP…VNME). Positions 252-984 (MRKERIKKTK…YVFPGNQVDK (733 aa)) are formate dehydrogenase. The 57-residue stretch at 257 to 313 (IKKTKTVCTYCGVGCSFEVWTKDREILKVQPSHDSPANKIATCVKGKFSWGHINSDQ) folds into the 4Fe-4S Mo/W bis-MGD-type domain.

The protein in the C-terminal section; belongs to the prokaryotic molybdopterin-containing oxidoreductase family. Requires [2Fe-2S] cluster as cofactor. The cofactor is [4Fe-4S] cluster. Mo-bis(molybdopterin guanine dinucleotide) serves as cofactor.

It carries out the reaction formate + NAD(+) = CO2 + NADH. The chain is Putative formate dehydrogenase SAB2186c from Staphylococcus aureus (strain bovine RF122 / ET3-1).